A 123-amino-acid polypeptide reads, in one-letter code: Large ribosomal subunit protein uL14 (123 aa).

It belongs to the universal ribosomal protein uL14 family. Part of the 50S ribosomal subunit. Forms a cluster with proteins L3 and L19. In the 70S ribosome, L14 and L19 interact and together make contacts with the 16S rRNA in bridges B5 and B8.

In terms of biological role, binds to 23S rRNA. Forms part of two intersubunit bridges in the 70S ribosome. The sequence is that of Large ribosomal subunit protein uL14 from Actinobacillus pleuropneumoniae serotype 7 (strain AP76).